The following is a 208-amino-acid chain: Large ribosomal subunit protein uL3 (208 aa).

Q149 bears the N5-methylglutamine mark.

This sequence belongs to the universal ribosomal protein uL3 family. Part of the 50S ribosomal subunit. Forms a cluster with proteins L14 and L19. In terms of processing, methylated by PrmB.

Functionally, one of the primary rRNA binding proteins, it binds directly near the 3'-end of the 23S rRNA, where it nucleates assembly of the 50S subunit. The polypeptide is Large ribosomal subunit protein uL3 (Actinobacillus succinogenes (strain ATCC 55618 / DSM 22257 / CCUG 43843 / 130Z)).